A 440-amino-acid chain; its full sequence is tRNA-2-methylthio-N(6)-dimethylallyladenosine synthase (440 aa).

One can recognise an MTTase N-terminal domain in the interval 3–119; sequence KKFFIKTFGC…LPELINQAQA (117 aa). 6 residues coordinate [4Fe-4S] cluster: cysteine 12, cysteine 48, cysteine 82, cysteine 158, cysteine 162, and cysteine 165. Positions 144–374 constitute a Radical SAM core domain; the sequence is RDNKYCAYVT…LELQKSILSE (231 aa). Residues 377 to 437 form the TRAM domain; that stretch reads KKYEGTVQEV…PFSLEGELLE (61 aa).

This sequence belongs to the methylthiotransferase family. MiaB subfamily. In terms of assembly, monomer. [4Fe-4S] cluster is required as a cofactor.

The protein localises to the cytoplasm. It catalyses the reaction N(6)-dimethylallyladenosine(37) in tRNA + (sulfur carrier)-SH + AH2 + 2 S-adenosyl-L-methionine = 2-methylsulfanyl-N(6)-dimethylallyladenosine(37) in tRNA + (sulfur carrier)-H + 5'-deoxyadenosine + L-methionine + A + S-adenosyl-L-homocysteine + 2 H(+). Catalyzes the methylthiolation of N6-(dimethylallyl)adenosine (i(6)A), leading to the formation of 2-methylthio-N6-(dimethylallyl)adenosine (ms(2)i(6)A) at position 37 in tRNAs that read codons beginning with uridine. In Aquifex aeolicus (strain VF5), this protein is tRNA-2-methylthio-N(6)-dimethylallyladenosine synthase.